A 353-amino-acid polypeptide reads, in one-letter code: NDGATILNLLDIVHPAAKTLVDIAKAQDDEVGDGTTSVCLLAGELLKESKYFIEEGMHPQIITKGYKEALKLALQFLHENAHSVADKNETEKREMLIKCAQTSLNSKLLAHYKEFFSELVVQAVETLETNLLDKDLIGIKMVTGGSVTDSFLVSGVAFKKTFSYAGFEQQPKKFNNPKICLLNIELELKAEKENAEIRIENPDDYKSIVDAEWELIYEKLRKIVESGANIVLSKLPIGDLATQYFADRNIFCAGRVDAEDMKRVQKSTGAIVQTTVNGLTEDVLGTCNQFEEVQIGAERYNLFKDCPHSKSATIILRGGAEQFIAEAERSLNDAIMIVRRCMKANKIVPGGGA.

Belongs to the TCP-1 chaperonin family. Heterooligomeric complex of about 850 to 900 kDa that forms two stacked rings, 12 to 16 nm in diameter.

Its subcellular location is the cytoplasm. Molecular chaperone; assists the folding of proteins upon ATP hydrolysis. Known to play a role, in vitro, in the folding of actin and tubulin. The protein is T-complex protein 1 subunit eta of Tetrahymena thermophila.